The chain runs to 652 residues: Gametogenetin (652 aa).

5 disordered regions span residues 1–39 (MGNL…MTSQ), 52–237 (PGSA…DSES), 251–273 (PSLA…GGGG), 291–473 (QGPL…GHKE), and 488–576 (LAAD…GAAN). 2 stretches are compositionally biased toward basic and acidic residues: residues 18–30 (QPSD…RRTS) and 124–133 (RLLEASHRGQ). Residues 123–486 (RRLLEASHRG…APTAAPALPP (364 aa)) are interaction with GGNBP1. 2 stretches are compositionally biased toward pro residues: residues 138-149 (SLRPLKPPPPPR) and 163-178 (QFPP…PPLP). The span at 201 to 212 (ESQAGPRNQGQT) shows a compositional bias: polar residues. Composition is skewed to low complexity over residues 213-230 (AGRA…GEMA), 251-267 (PSLA…AKAS), and 299-312 (ARPL…AQEA). A Phosphoserine modification is found at S389. The segment covering 407 to 422 (APALLAPPTFIFPAPT) has biased composition (low complexity). 2 stretches are compositionally biased toward pro residues: residues 428 to 466 (RPGP…PPLT) and 495 to 513 (APSP…PVSA). An interactions with ZNF403/GGNBP2 and OAZ3 region spans residues 491–652 (DQAPAPSPAP…HYDLQATHSN (162 aa)). The span at 523–532 (TRTRRNKGSR) shows a compositional bias: basic residues. Positions 538–552 (TRKDGLHGDGPRERA) are enriched in basic and acidic residues.

As to quaternary structure, interacts with FANCL, GGNBP1 and ZNF403/GGNBP2.

May be involved in spermatogenesis. This chain is Gametogenetin (GGN), found in Homo sapiens (Human).